The chain runs to 444 residues: C4-dicarboxylate transport protein (444 aa).

The next 9 membrane-spanning stretches (helical) occupy residues 15-35 (VIVAICIGIALGHYYPQFGVA), 46-66 (LIKMIIAPIIFCTVVSGIAGM), 78-98 (YALLYFEIVSTIALLVGLIVV), 143-163 (IVGAFATGDILQVLMFSVIFG), 199-219 (PIGAFGAMAFTIGAYGVGSLV), 224-244 (LMICFYITCLAFILIVLGGIA), 291-311 (VVGLVIPTGYSFNLDGTAIYL), 332-352 (ITLLVVLLLSSKGAAGVTGSG), and 354-374 (IVLAATLSAVGHLPVAGLALI). The tract at residues 422–444 (GIADTRPEDDLGVAEGPTPSNVK) is disordered.

This sequence belongs to the dicarboxylate/amino acid:cation symporter (DAACS) (TC 2.A.23) family.

Its subcellular location is the cell inner membrane. Responsible for the transport of dicarboxylates such as succinate, fumarate, and malate from the periplasm across the membrane. The protein is C4-dicarboxylate transport protein of Pseudomonas fluorescens (strain Pf0-1).